The primary structure comprises 577 residues: Arginine--tRNA ligase (577 aa).

Positions P122–H132 match the 'HIGH' region motif.

The protein belongs to the class-I aminoacyl-tRNA synthetase family. Monomer.

The protein resides in the cytoplasm. It catalyses the reaction tRNA(Arg) + L-arginine + ATP = L-arginyl-tRNA(Arg) + AMP + diphosphate. The chain is Arginine--tRNA ligase from Escherichia coli O8 (strain IAI1).